The sequence spans 264 residues: 3-methyl-2-oxobutanoate hydroxymethyltransferase (264 aa).

Residues D45 and D84 each contribute to the Mg(2+) site. 3-methyl-2-oxobutanoate contacts are provided by residues 45–46 (DS), D84, and K113. Mg(2+) is bound at residue E115. The active-site Proton acceptor is E182.

The protein belongs to the PanB family. As to quaternary structure, homodecamer; pentamer of dimers. It depends on Mg(2+) as a cofactor.

It localises to the cytoplasm. The enzyme catalyses 3-methyl-2-oxobutanoate + (6R)-5,10-methylene-5,6,7,8-tetrahydrofolate + H2O = 2-dehydropantoate + (6S)-5,6,7,8-tetrahydrofolate. It functions in the pathway cofactor biosynthesis; (R)-pantothenate biosynthesis; (R)-pantoate from 3-methyl-2-oxobutanoate: step 1/2. Functionally, catalyzes the reversible reaction in which hydroxymethyl group from 5,10-methylenetetrahydrofolate is transferred onto alpha-ketoisovalerate to form ketopantoate. This Nitrosococcus oceani (strain ATCC 19707 / BCRC 17464 / JCM 30415 / NCIMB 11848 / C-107) protein is 3-methyl-2-oxobutanoate hydroxymethyltransferase.